The chain runs to 346 residues: Guanine nucleotide-binding protein subunit beta-2 (346 aa).

WD repeat units lie at residues 57–96 (GHINKVNSVHFAGDSRHCVTGSLDGKLIIWDTWTANKVQV), 99–138 (LRSAWVMTVAFSPSGNFVACGGMDNQCTVYDVNNRDASGV), 147–185 (GYEGFLSSCRFLDDTHLITGSGDMKICHWDLEKGVKTMD), 188–227 (GHAGDIAGLSLSPDMNTYITGSVDKTAKLWDVREETHKQM), 230–269 (GHEMDVNSVCYHPSGNGFASASEDQTARLYDIRADQQIAL), 274–313 (QKNTGFTSCALSTSGRYLLCSGIEGNIHSFDTMKVCHNGM), and 316–346 (GHENRITCISLSPNGMCLASTSWDQQVRLWL).

The protein belongs to the WD repeat G protein beta family. G proteins are composed of 3 units, alpha, beta and gamma. Interacts with Ggammae/Guanine nucleotide-binding protein subunit gamma-e.

In terms of biological role, guanine nucleotide-binding proteins (G proteins) are involved as modulators or transducers in various transmembrane signaling systems. The beta and gamma chains are required for the GTPase activity, for replacement of GDP by GTP, and for G protein-effector interaction. This chain is Guanine nucleotide-binding protein subunit beta-2, found in Calliphora vicina (Blue blowfly).